A 357-amino-acid polypeptide reads, in one-letter code: Heat-inducible transcription repressor HrcA (357 aa).

The protein belongs to the HrcA family.

Functionally, negative regulator of class I heat shock genes (grpE-dnaK-dnaJ and groELS operons). Prevents heat-shock induction of these operons. The sequence is that of Heat-inducible transcription repressor HrcA from Ureaplasma parvum serovar 3 (strain ATCC 27815 / 27 / NCTC 11736).